We begin with the raw amino-acid sequence, 336 residues long: 4-hydroxy-3-methylbut-2-enyl diphosphate reductase (336 aa).

The disordered stretch occupies residues 1–23 (MFGQRLDTLGAMSSSVSSPSPET). [4Fe-4S] cluster is bound at residue C36. (2E)-4-hydroxy-3-methylbut-2-enyl diphosphate contacts are provided by H65 and H98. Positions 65 and 98 each coordinate dimethylallyl diphosphate. H65 and H98 together coordinate isopentenyl diphosphate. C120 lines the [4Fe-4S] cluster pocket. (2E)-4-hydroxy-3-methylbut-2-enyl diphosphate is bound at residue H148. Dimethylallyl diphosphate is bound at residue H148. H148 serves as a coordination point for isopentenyl diphosphate. The active-site Proton donor is the E150. T190 contributes to the (2E)-4-hydroxy-3-methylbut-2-enyl diphosphate binding site. Position 220 (C220) interacts with [4Fe-4S] cluster. (2E)-4-hydroxy-3-methylbut-2-enyl diphosphate contacts are provided by S248, S249, N250, and S293. Residues S248, S249, N250, and S293 each coordinate dimethylallyl diphosphate. Isopentenyl diphosphate-binding residues include S248, S249, N250, and S293.

The protein belongs to the IspH family. The cofactor is [4Fe-4S] cluster.

The enzyme catalyses isopentenyl diphosphate + 2 oxidized [2Fe-2S]-[ferredoxin] + H2O = (2E)-4-hydroxy-3-methylbut-2-enyl diphosphate + 2 reduced [2Fe-2S]-[ferredoxin] + 2 H(+). The catalysed reaction is dimethylallyl diphosphate + 2 oxidized [2Fe-2S]-[ferredoxin] + H2O = (2E)-4-hydroxy-3-methylbut-2-enyl diphosphate + 2 reduced [2Fe-2S]-[ferredoxin] + 2 H(+). It participates in isoprenoid biosynthesis; dimethylallyl diphosphate biosynthesis; dimethylallyl diphosphate from (2E)-4-hydroxy-3-methylbutenyl diphosphate: step 1/1. Its pathway is isoprenoid biosynthesis; isopentenyl diphosphate biosynthesis via DXP pathway; isopentenyl diphosphate from 1-deoxy-D-xylulose 5-phosphate: step 6/6. Functionally, catalyzes the conversion of 1-hydroxy-2-methyl-2-(E)-butenyl 4-diphosphate (HMBPP) into a mixture of isopentenyl diphosphate (IPP) and dimethylallyl diphosphate (DMAPP). Acts in the terminal step of the DOXP/MEP pathway for isoprenoid precursor biosynthesis. This Corynebacterium efficiens (strain DSM 44549 / YS-314 / AJ 12310 / JCM 11189 / NBRC 100395) protein is 4-hydroxy-3-methylbut-2-enyl diphosphate reductase.